Here is a 306-residue protein sequence, read N- to C-terminus: Curved DNA-binding protein (306 aa).

The J domain occupies 5–69 (DYYAIMGVKP…QRRAEYDQMW (65 aa)).

The protein localises to the cytoplasm. Its subcellular location is the nucleoid. Functionally, DNA-binding protein that preferentially recognizes a curved DNA sequence. It is probably a functional analog of DnaJ; displays overlapping activities with DnaJ, but functions under different conditions, probably acting as a molecular chaperone in an adaptive response to environmental stresses other than heat shock. Lacks autonomous chaperone activity; binds native substrates and targets them for recognition by DnaK. Its activity is inhibited by the binding of CbpM. This chain is Curved DNA-binding protein, found in Escherichia coli (strain SMS-3-5 / SECEC).